A 162-amino-acid polypeptide reads, in one-letter code: Peptide deformylase-like (162 aa).

It belongs to the polypeptide deformylase family.

The polypeptide is Peptide deformylase-like (Staphylococcus aureus (strain MRSA252)).